The following is a 1218-amino-acid chain: DNA-directed RNA polymerase subunit beta' (1218 aa).

Residues Cys60, Cys62, Cys75, and Cys78 each contribute to the Zn(2+) site. Mg(2+) is bound by residues Asp455, Asp457, and Asp459. Cys824, Cys897, Cys904, and Cys907 together coordinate Zn(2+). Residues 1195-1218 form a disordered region; that stretch reads ENEAQSDKSQDEQEIGEITVDMGE.

The protein belongs to the RNA polymerase beta' chain family. In terms of assembly, the RNAP catalytic core consists of 2 alpha, 1 beta, 1 beta' and 1 omega subunit. When a sigma factor is associated with the core the holoenzyme is formed, which can initiate transcription. Requires Mg(2+) as cofactor. Zn(2+) serves as cofactor.

It carries out the reaction RNA(n) + a ribonucleoside 5'-triphosphate = RNA(n+1) + diphosphate. Functionally, DNA-dependent RNA polymerase catalyzes the transcription of DNA into RNA using the four ribonucleoside triphosphates as substrates. This Natranaerobius thermophilus (strain ATCC BAA-1301 / DSM 18059 / JW/NM-WN-LF) protein is DNA-directed RNA polymerase subunit beta'.